A 214-amino-acid chain; its full sequence is Large ribosomal subunit protein uL3 (214 aa).

Residues 131 to 155 form a disordered region; that stretch reads GAQRTSHGNSRSHRVPGSIGMAQDP. N5-methylglutamine is present on glutamine 153.

The protein belongs to the universal ribosomal protein uL3 family. As to quaternary structure, part of the 50S ribosomal subunit. Forms a cluster with proteins L14 and L19. Methylated by PrmB.

Its function is as follows. One of the primary rRNA binding proteins, it binds directly near the 3'-end of the 23S rRNA, where it nucleates assembly of the 50S subunit. The chain is Large ribosomal subunit protein uL3 from Neisseria gonorrhoeae (strain ATCC 700825 / FA 1090).